A 102-amino-acid chain; its full sequence is Small ribosomal subunit protein uS10 (102 aa).

The protein belongs to the universal ribosomal protein uS10 family. In terms of assembly, part of the 30S ribosomal subunit.

In terms of biological role, involved in the binding of tRNA to the ribosomes. In Gluconobacter oxydans (strain 621H) (Gluconobacter suboxydans), this protein is Small ribosomal subunit protein uS10.